Reading from the N-terminus, the 760-residue chain is Penicillin-binding protein 1B (760 aa).

Residues 1-8 (MFFNFKKY) are Cytoplasmic-facing. The chain crosses the membrane as a helical; Signal-anchor for type II membrane protein span at residues 9 to 29 (FLIKVFFFVLILTLCYGLYLY). The Extracellular segment spans residues 30–760 (VKINRFINGK…NFLFWLKNLF (731 aa)). The interval 136-308 (FRLEPKLIAM…SLYSPWTNPN (173 aa)) is transglycosylase. Glutamate 174 (proton donor; for transglycosylase activity) is an active-site residue. The interval 392–684 (EQAVKIEIPI…SSGAMQIYKR (293 aa)) is transpeptidase. Residue serine 451 is the Acyl-ester intermediate; for transpeptidase activity of the active site.

In the N-terminal section; belongs to the glycosyltransferase 51 family. This sequence in the C-terminal section; belongs to the transpeptidase family.

It localises to the cell membrane. The catalysed reaction is [GlcNAc-(1-&gt;4)-Mur2Ac(oyl-L-Ala-gamma-D-Glu-L-Lys-D-Ala-D-Ala)](n)-di-trans,octa-cis-undecaprenyl diphosphate + beta-D-GlcNAc-(1-&gt;4)-Mur2Ac(oyl-L-Ala-gamma-D-Glu-L-Lys-D-Ala-D-Ala)-di-trans,octa-cis-undecaprenyl diphosphate = [GlcNAc-(1-&gt;4)-Mur2Ac(oyl-L-Ala-gamma-D-Glu-L-Lys-D-Ala-D-Ala)](n+1)-di-trans,octa-cis-undecaprenyl diphosphate + di-trans,octa-cis-undecaprenyl diphosphate + H(+). The enzyme catalyses Preferential cleavage: (Ac)2-L-Lys-D-Ala-|-D-Ala. Also transpeptidation of peptidyl-alanyl moieties that are N-acyl substituents of D-alanine.. The protein operates within cell wall biogenesis; peptidoglycan biosynthesis. Its function is as follows. Cell wall formation. Synthesis of cross-linked peptidoglycan from the lipid intermediates. The enzyme has a penicillin-insensitive transglycosylase N-terminal domain (formation of linear glycan strands) and a penicillin-sensitive transpeptidase C-terminal domain (cross-linking of the peptide subunits). This Buchnera aphidicola subsp. Acyrthosiphon pisum (strain APS) (Acyrthosiphon pisum symbiotic bacterium) protein is Penicillin-binding protein 1B (mrcB).